Reading from the N-terminus, the 108-residue chain is Ribonuclease P protein component 4 (108 aa).

Cys-67, Cys-70, Cys-93, and Cys-96 together coordinate Zn(2+).

This sequence belongs to the eukaryotic/archaeal RNase P protein component 4 family. As to quaternary structure, consists of a catalytic RNA component and at least 4-5 protein subunits. Zn(2+) is required as a cofactor.

The protein resides in the cytoplasm. It carries out the reaction Endonucleolytic cleavage of RNA, removing 5'-extranucleotides from tRNA precursor.. Part of ribonuclease P, a protein complex that generates mature tRNA molecules by cleaving their 5'-ends. In Methanococcoides burtonii (strain DSM 6242 / NBRC 107633 / OCM 468 / ACE-M), this protein is Ribonuclease P protein component 4.